Here is a 639-residue protein sequence, read N- to C-terminus: Synaptotagmin-16 (639 aa).

The segment covering 95–119 (NSDLQDSVQTASPTLGQQAEDSSSV) has biased composition (polar residues). Positions 95 to 191 (NSDLQDSVQT…SSESDEDVTK (97 aa)) are disordered. The span at 121 to 134 (PPWPSKIPGAPKPQ) shows a compositional bias: pro residues. The segment covering 142-151 (EEDHHSERQR) has biased composition (basic and acidic residues). The span at 174-187 (GDDEEPSTSSESDE) shows a compositional bias: acidic residues. Positions 344 to 463 (KCGDLDVIFE…HPEGEMKVTL (120 aa)) constitute a C2 1 domain. Residues 470 to 496 (NLSSGESPLSPSVVSHSDSASSTQSLS) form a disordered region. The span at 476–496 (SPLSPSVVSHSDSASSTQSLS) shows a compositional bias: low complexity. In terms of domain architecture, C2 2 spans 499–634 (GVPELLVGLS…SKGQQTCRWH (136 aa)).

This sequence belongs to the synaptotagmin family. Homodimer. Can also form heterodimers. In terms of tissue distribution, highly expressed in heart and testis. Moderately expressed in kidney.

In terms of biological role, may be involved in the trafficking and exocytosis of secretory vesicles in non-neuronal tissues. Is Ca(2+)-independent. This Mus musculus (Mouse) protein is Synaptotagmin-16 (Syt16).